A 29-amino-acid polypeptide reads, in one-letter code: Snake venom metalloproteinase bothrolysin (29 aa).

Residues R6 to I29 enclose the Peptidase M12B domain. E9 contributes to the Ca(2+) binding site.

This sequence belongs to the venom metalloproteinase (M12B) family. Zn(2+) is required as a cofactor. In terms of tissue distribution, expressed by the venom gland.

It localises to the secreted. It carries out the reaction Cleavage of 4-Gln-|-His-5, 9-Ser-|-His-10 and 14-Ala-|-Leu-15 of insulin B chain and Pro-|-Phe of angiotensin I.. Functionally, snake venom zinc metalloproteinase that impairs hemostasis in the envenomed animal. This chain is Snake venom metalloproteinase bothrolysin, found in Bothrops jararaca (Jararaca).